Here is a 280-residue protein sequence, read N- to C-terminus: Fructose-1,6-bisphosphatase class 1 (280 aa).

Mg(2+) is bound by residues glutamate 64, aspartate 83, leucine 85, and aspartate 86. Substrate contacts are provided by residues 86-89 (DGSS), tyrosine 189, and lysine 220. Glutamate 226 is a Mg(2+) binding site.

This sequence belongs to the FBPase class 1 family. In terms of assembly, homotetramer. Requires Mg(2+) as cofactor.

It localises to the cytoplasm. It catalyses the reaction beta-D-fructose 1,6-bisphosphate + H2O = beta-D-fructose 6-phosphate + phosphate. The protein operates within carbohydrate biosynthesis; gluconeogenesis. The sequence is that of Fructose-1,6-bisphosphatase class 1 from Campylobacter jejuni subsp. jejuni serotype O:23/36 (strain 81-176).